A 234-amino-acid polypeptide reads, in one-letter code: Large ribosomal subunit protein eL6 (234 aa).

Belongs to the eukaryotic ribosomal protein eL6 family.

The protein is Large ribosomal subunit protein eL6 (RPL6) of Mesembryanthemum crystallinum (Common ice plant).